The primary structure comprises 344 residues: Lipase chaperone (344 aa).

Residues 14 to 34 traverse the membrane as a helical segment; that stretch reads AAIYGVVGLAAIAGVAMWSGA.

Belongs to the lipase chaperone family.

The protein localises to the cell inner membrane. In terms of biological role, may be involved in the folding of the extracellular lipase during its passage through the periplasm. This is Lipase chaperone from Burkholderia cenocepacia (strain HI2424).